The chain runs to 1463 residues: Secretory phospholipase A2 receptor (1463 aa).

Residues 1–20 (MPLLSLSLLLLLLQVPAGSA) form the signal peptide. Over 21-1392 (ETAAWAVTPE…IHTVKKHPGK (1372 aa)) the chain is Extracellular. Residues 38-115 (KGIFIIQSEN…CDSTHVSLKW (78 aa)) enclose the Ricin B-type lectin domain. Residue Asn-93 is glycosylated (N-linked (GlcNAc...) asparagine). Residues 173 to 221 (AHGTPCMFPFQYNQQWHHECTREGREDNLLWCATTSRYERDEKWGFCPD) enclose the Fibronectin type-II domain. Cystine bridges form between Cys-178–Cys-204, Cys-192–Cys-219, Cys-260–Cys-354, Cys-330–Cys-346, Cys-406–Cys-501, Cys-478–Cys-493, Cys-617–Cys-634, Cys-699–Cys-796, Cys-774–Cys-788, Cys-840–Cys-938, Cys-915–Cys-930, Cys-992–Cys-1096, Cys-1068–Cys-1088, Cys-1209–Cys-1223, Cys-1280–Cys-1377, and Cys-1354–Cys-1369. C-type lectin domains follow at residues 229 to 353 (CDAV…LPYV), 357 to 500 (YLNP…LFYL), 504 to 641 (TGLV…KAMS), 646 to 795 (PVEN…REWI), 799 to 937 (PRDV…MPSI), 941 to 1095 (KKVW…YGFV), 1099 to 1230 (MQDA…LQGA), and 1235 to 1376 (PTET…KGFI). N-linked (GlcNAc...) asparagine glycosylation is present at Asn-454. Asn-1057 carries N-linked (GlcNAc...) asparagine glycosylation. A helical transmembrane segment spans residues 1393–1421 (GPSHSVIPLTVALTLLVILAISTLSFCMY). Residues 1422 to 1463 (KHSHIIFGRLAQFRNPYYPSANFSTVHLEENILISDLEKNDQ) lie on the Cytoplasmic side of the membrane. The Endocytosis signal signature appears at 1436–1442 (NPYYPSA).

In terms of assembly, interacts with sPLA2-IB/PLA2G1B; this interaction mediates intracellular signaling as well as clearance of extracellular sPLA2-IB/PLA2G1B via endocytotic pathway. Interacts with sPLA2-X/PLA2G10; this interaction mediates sPLA2-X/PLA2G10 clearance and inactivation. The secretory phospholipase A2 receptor form may be produced by the action of metalloproteinases. It contains all extracellular domains and only lacks transmembrane and cytosolic regions. It is however unclear whether this form is produced by proteolytic cleavage as suggested by some experiments, or by alternative splicing.

The protein localises to the cell membrane. It is found in the secreted. Functionally, receptor for secretory phospholipase A2 (sPLA2). Also able to bind to snake PA2-like toxins. Although its precise function remains unclear, binding of sPLA2 to its receptor participates in both positive and negative regulation of sPLA2 functions as well as clearance of sPLA2. Binding of sPLA2-IB/PLA2G1B induces various effects depending on the cell type, such as activation of the mitogen-activated protein kinase (MAPK) cascade to induce cell proliferation, the production of lipid mediators, selective release of arachidonic acid in bone marrow-derived mast cells. In neutrophils, binding of sPLA2-IB/PLA2G1B can activate p38 MAPK to stimulate elastase release and cell adhesion. May be involved in responses in pro-inflammatory cytokine productions during endotoxic shock. Also has endocytic properties and rapidly internalizes sPLA2 ligands, which is particularly important for the clearance of extracellular sPLA2s to protect their potent enzymatic activities. The soluble secretory phospholipase A2 receptor form is circulating and acts as a negative regulator of sPLA2 functions by blocking the biological functions of sPLA2-IB/PLA2G1B and sPLA2-X/PLA2G10. The sequence is that of Secretory phospholipase A2 receptor (PLA2R1) from Bos taurus (Bovine).